Reading from the N-terminus, the 57-residue chain is Small ribosomal subunit protein bS21 (57 aa).

The protein belongs to the bacterial ribosomal protein bS21 family.

The polypeptide is Small ribosomal subunit protein bS21 (Geobacillus kaustophilus (strain HTA426)).